The sequence spans 173 residues: Signal peptidase complex catalytic subunit SEC11 (173 aa).

Residues methionine 1–glutamine 15 lie on the Cytoplasmic side of the membrane. A helical; Signal-anchor for type II membrane protein transmembrane segment spans residues isoleucine 16–valine 36. Topologically, residues serine 37–glutamate 173 are lumenal. Catalysis depends on charge relay system residues serine 50, histidine 89, and aspartate 115. Residues valine 159–leucine 170 form a C-terminal short (CTS) helix region.

It belongs to the peptidase S26B family. As to quaternary structure, component of the signal peptidase complex (SPC) composed of a catalytic subunit SEC11 and three accessory subunits SPC1, SPC2 and SPC3. The complex induces a local thinning of the ER membrane which is used to measure the length of the signal peptide (SP) h-region of protein substrates. This ensures the selectivity of the complex towards h-regions shorter than 18-20 amino acids. SPC associates with the translocon complex.

The protein resides in the endoplasmic reticulum membrane. It catalyses the reaction Cleavage of hydrophobic, N-terminal signal or leader sequences from secreted and periplasmic proteins.. Catalytic component of the signal peptidase complex (SPC) which catalyzes the cleavage of N-terminal signal sequences from nascent proteins as they are translocated into the lumen of the endoplasmic reticulum. Specifically cleaves N-terminal signal peptides that contain a hydrophobic alpha-helix (h-region) shorter than 18-20 amino acids. This chain is Signal peptidase complex catalytic subunit SEC11 (SEC11), found in Leptosphaeria maculans (strain JN3 / isolate v23.1.3 / race Av1-4-5-6-7-8) (Blackleg fungus).